A 238-amino-acid polypeptide reads, in one-letter code: Probable solute-binding protein AdeT2 (238 aa).

It belongs to the bacterial solute-binding protein 7 family.

Its function is as follows. Mediates antimicrobial resistance via active efflux. Contributes to resistance to antibiotics such as chloramphenicol, erythromycin and novobiocin. May be part of a tripartite ATP-independent periplasmic (TRAP) transport system. The polypeptide is Probable solute-binding protein AdeT2 (Acinetobacter baumannii).